A 2118-amino-acid chain; its full sequence is Separin (2118 aa).

Position 1121 is a phosphoserine (Ser1121). Over residues 1309-1318 (KCSGRGRRRI) the composition is skewed to basic residues. A disordered region spans residues 1309-1352 (KCSGRGRRRIASVPPPLHNSSQKGLEEEGPPCTPKPPGRARQAG). Ser1391 and Ser1394 each carry phosphoserine. Positions 1408 to 1428 (EEPKRRGTASRTRGQTRKGRS) are disordered. Ser1504 is modified (phosphoserine). The 96-residue stretch at 1941–2036 (PQNTFYVLNP…SAALAVHGNL (96 aa)) folds into the Peptidase C50 domain. Cys2025 is an active-site residue.

As to quaternary structure, interacts with PTTG1. Interacts with RAD21. In terms of processing, autocleaves. This function, which is not essential for its protease activity, is unknown. Phosphorylated by CDK1. There is 8 Ser/Thr phosphorylation sites. Among them, only Ser-1121 phosphorylation is the major site, which conducts to the enzyme inactivation.

The protein localises to the cytoplasm. Its subcellular location is the nucleus. It catalyses the reaction All bonds known to be hydrolyzed by this endopeptidase have arginine in P1 and an acidic residue in P4. P6 is often occupied by an acidic residue or by a hydroxy-amino-acid residue, the phosphorylation of which enhances cleavage.. Regulated by at least two independent mechanisms. First, it is inactivated via its interaction with securin/PTTG1, which probably covers its active site. The association with PTTG1 is not only inhibitory, since PTTG1 is also required for activating it, the enzyme being inactive in cells in which PTTG1 is absent. PTTG1 degradation at anaphase, liberates it and triggers RAD21 cleavage. Second, phosphorylation at Ser-1121 inactivates it. The complete phosphorylation during mitosis, is removed when cells undergo anaphase. Activation of the enzyme at the metaphase-anaphase transition probably requires the removal of both securin and inhibitory phosphate. Caspase-like protease, which plays a central role in the chromosome segregation by cleaving the SCC1/RAD21 subunit of the cohesin complex at the onset of anaphase. During most of the cell cycle, it is inactivated by different mechanisms. The polypeptide is Separin (Espl1) (Mus musculus (Mouse)).